A 352-amino-acid polypeptide reads, in one-letter code: ER-derived vesicles protein ERV41 (352 aa).

Over 1-23 (MAGLKTFDAFPKTEEQYKKKSTK) the chain is Cytoplasmic. Residues 24–44 (GGLTSLLTYLFLLFIAWTEFG) traverse the membrane as a helical segment. The Lumenal segment spans residues 45–311 (EYFGGYIDQQ…FLVRLVAICS (267 aa)). Residues 312 to 332 (FLVYCASWIFTLLDMALITIM) traverse the membrane as a helical segment. The Cytoplasmic portion of the chain corresponds to 333 to 352 (GPKWSLRYQPDDKTKGILDR). Residues 349-350 (IL) carry the Isoleucine-leucine motif motif.

The protein belongs to the ERGIC family. In terms of assembly, interacts with ERV46.

The protein localises to the endoplasmic reticulum membrane. It is found in the golgi apparatus membrane. The protein resides in the cytoplasmic vesicle. Its subcellular location is the COPII-coated vesicle membrane. Its function is as follows. Constituent of COPII-coated endoplasmic reticulum-derived transport vesicles. Required for efficient transport of a subset of secretory proteins to the Golgi. The C-terminal Ile-Leu motif is required for exit from the endoplasmic reticulum. Facilitates retrograde transport from the Golgi to the endoplasmic reticulum. The protein is ER-derived vesicles protein ERV41 (ERV41) of Saccharomyces cerevisiae (strain ATCC 204508 / S288c) (Baker's yeast).